The following is a 174-amino-acid chain: Eukaryotic translation elongation factor 1 epsilon-1 (174 aa).

A2 is subject to N-acetylalanine. The interval 2–56 (AAAAELSLLEKSLGLSKGNKYSAQGERQIPVLQTNNGPSLTGLTTIAAHLVKQAN) is N-terminal. Residues 50-173 (HLVKQANKEY…FIKNRLYTNS (124 aa)) enclose the GST C-terminal domain. Positions 57 to 63 (KEYLLGS) are linker. A C-terminal region spans residues 64–152 (TAEEKAIVQQ…SRWFCHIQHY (89 aa)). K138 carries the N6-acetyllysine modification. Residues 153 to 169 (PGIRQHLSSVVFIKNRL) are a coiled coil.

As to quaternary structure, part of a multisubunit complex that groups tRNA ligases for Arg (RARS1), Asp (DARS1), Gln (QARS1), Ile (IARS1), Leu (LARS1), Lys (KARS1), Met (MARS1) the bifunctional ligase for Glu and Pro (EPRS1) and the auxiliary subunits AIMP1/p43, AIMP2/p38 and EEF1E1/p18. Can interact simultaneously with MARS1 and EPRS1. Forms a linear complex that contains MARS1, EEF1E1, EPRS1 and AIMP2 that is at the core of the multisubunit complex. Interacts with ATM and ATR. The interaction with ATM, which takes place independently of TP53, is induced by DNA damage that may occur during genotoxic stress or cell growth. The interaction with ATR is enhanced by UV irradiation. As to expression, down-regulated in various cancer tissues.

It localises to the cytoplasm. Its subcellular location is the cytosol. The protein resides in the nucleus. Its function is as follows. Positive modulator of ATM response to DNA damage. The chain is Eukaryotic translation elongation factor 1 epsilon-1 (EEF1E1) from Homo sapiens (Human).